The chain runs to 122 residues: Large ribosomal subunit protein uL14 (122 aa).

This sequence belongs to the universal ribosomal protein uL14 family. In terms of assembly, part of the 50S ribosomal subunit. Forms a cluster with proteins L3 and L19. In the 70S ribosome, L14 and L19 interact and together make contacts with the 16S rRNA in bridges B5 and B8.

Its function is as follows. Binds to 23S rRNA. Forms part of two intersubunit bridges in the 70S ribosome. This Streptococcus pneumoniae (strain JJA) protein is Large ribosomal subunit protein uL14.